Consider the following 155-residue polypeptide: Fibroblast growth factor 2 (155 aa).

Residues 1 to 9 constitute a propeptide that is removed on maturation; sequence MAAGSITTL. The segment at 1 to 20 is disordered; it reads MAAGSITTLPALPEDGGSSA. N36 is a heparin binding site. The Cell attachment site; atypical motif lies at 46–48; the sequence is DGR. A Phosphotyrosine; by TEC modification is found at Y82. The short motif at 88–90 is the Cell attachment site; atypical element; the sequence is DGR. K95 participates in a covalent cross-link: Glycyl lysine isopeptide (Lys-Gly) (interchain with G-Cter in SUMO1). The interval 128-144 is heparin-binding; that stretch reads KRTGQYKLGPKTGPGQK.

This sequence belongs to the heparin-binding growth factors family. As to quaternary structure, monomer. Homodimer. Interacts with FGFR1, FGFR2, FGFR3 and FGFR4. Affinity between fibroblast growth factors (FGFs) and their receptors is increased by heparan sulfate glycosaminoglycans that function as coreceptors. Interacts with CSPG4, FGFBP1 and TEC. Found in a complex with FGFBP1, FGF1 and FGF2. Interacts with FGFBP3. Interacts with integrin ITGAV:ITGB3; the interaction is required for FGF2 signaling. Interacts with SNORC (via the extracellular domain). Interacts with glypican GPC3. Post-translationally, phosphorylation at Tyr-82 regulates FGF2 unconventional secretion.

Its subcellular location is the secreted. The protein localises to the nucleus. In terms of biological role, acts as a ligand for FGFR1, FGFR2, FGFR3 and FGFR4. Also acts as an integrin ligand which is required for FGF2 signaling. Binds to integrin ITGAV:ITGB3. Plays an important role in the regulation of cell survival, cell division, cell differentiation and cell migration. Functions as a potent mitogen in vitro. Can induce angiogenesis. Mediates phosphorylation of ERK1/2 and thereby promotes retinal lens fiber differentiation. The chain is Fibroblast growth factor 2 (FGF2) from Ovis aries (Sheep).